A 195-amino-acid polypeptide reads, in one-letter code: Probable GTP-binding protein EngB (195 aa).

The region spanning 22–195 (GLPEIALAGR…WNAILAKINK (174 aa)) is the EngB-type G domain. Residues 30–37 (GRSNVGKS), 57–61 (GKTQT), 75–78 (DVPG), 142–145 (TKAD), and 174–176 (FSS) each bind GTP. Mg(2+)-binding residues include serine 37 and threonine 59.

Belongs to the TRAFAC class TrmE-Era-EngA-EngB-Septin-like GTPase superfamily. EngB GTPase family. Mg(2+) serves as cofactor.

Functionally, necessary for normal cell division and for the maintenance of normal septation. The polypeptide is Probable GTP-binding protein EngB (Bacillus pumilus (strain SAFR-032)).